The sequence spans 361 residues: Mannose-1-phosphate guanylyltransferase 1 (361 aa).

GDP-alpha-D-mannose-binding residues include leucine 6 and valine 7. Residues glycine 9, glycine 11, threonine 12, arginine 13, and lysine 23 each contribute to the diphosphate site. GDP-alpha-D-mannose is bound by residues glycine 85, asparagine 109, aspartate 111, glycine 146, and asparagine 173.

It belongs to the transferase hexapeptide repeat family. As to quaternary structure, interacts in vitro with CSN5A and CSN5B, but in planta only with CSN5B, which targets CYT1 for degradation in the dark by the 26S proteasome. Forms homodimers in the unliganded structure. The product-bound structure is composed of six dimers that form a dodecameric assembly.

Its subcellular location is the cytoplasm. It is found in the nucleus. The enzyme catalyses alpha-D-mannose 1-phosphate + GTP + H(+) = GDP-alpha-D-mannose + diphosphate. It participates in nucleotide-sugar biosynthesis; GDP-alpha-D-mannose biosynthesis; GDP-alpha-D-mannose from alpha-D-mannose 1-phosphate (GTP route): step 1/1. Essential protein during embryogenesis. Catalyzes a reaction of the Smirnoff-Wheeler pathway, the major route to ascorbate biosynthesis in plants. Plays an essential role in plant growth and development and cell-wall architecture. Provides GDP-mannose, used for cell wall carbohydrate biosynthesis, protein N-glycosylation, as well as for the biosynthesis of the antioxidant ascorbate. This chain is Mannose-1-phosphate guanylyltransferase 1, found in Arabidopsis thaliana (Mouse-ear cress).